The sequence spans 141 residues: Hemoglobin subunit alpha (141 aa).

Positions 1-141 constitute a Globin domain; it reads VLSGEDKNNI…VSTVLTSKYR (141 aa). Ser3 carries the post-translational modification Phosphoserine. Lys7 and Lys11 each carry N6-succinyllysine. Lys16 is subject to N6-acetyllysine; alternate. At Lys16 the chain carries N6-succinyllysine; alternate. Position 24 is a phosphotyrosine (Tyr24). Position 40 is an N6-succinyllysine (Lys40). Ser49 bears the Phosphoserine mark. An O2-binding site is contributed by His58. His87 contacts heme b. Residue Ser102 is modified to Phosphoserine. Thr108 carries the phosphothreonine modification. Phosphoserine is present on residues Ser124 and Ser131. Thr134 and Thr137 each carry phosphothreonine. A Phosphoserine modification is found at Ser138.

This sequence belongs to the globin family. Heterotetramer of two alpha chains and two beta chains. As to expression, red blood cells.

Functionally, involved in oxygen transport from the lung to the various peripheral tissues. Its function is as follows. Hemopressin acts as an antagonist peptide of the cannabinoid receptor CNR1. Hemopressin-binding efficiently blocks cannabinoid receptor CNR1 and subsequent signaling. In Ondatra zibethicus (Muskrat), this protein is Hemoglobin subunit alpha (HBA).